Here is a 67-residue protein sequence, read N- to C-terminus: V-type proton ATPase subunit e (67 aa).

At 1–2 the chain is on the lumenal side; sequence MG. Residues 3-23 form a helical membrane-spanning segment; sequence GLVVLLVGLLTALMSVVSYYV. The Cytoplasmic portion of the chain corresponds to 24-35; sequence SPKGNNTSTWQM. Residues 36 to 56 traverse the membrane as a helical segment; sequence SLILTFSCCYLLWAITYLAQL. The Lumenal segment spans residues 57-67; the sequence is HPLEAPSRVLE.

This sequence belongs to the V-ATPase e1/e2 subunit family. V-ATPase is a heteromultimeric enzyme composed of a peripheral catalytic V1 complex (components A to H) attached to an integral membrane V0 proton pore complex (components: a, c, c', c'', d, e, f and VOA1).

The protein resides in the vacuole membrane. In terms of biological role, subunit of the V0 complex of vacuolar(H+)-ATPase (V-ATPase), a multisubunit enzyme composed of a peripheral complex (V1) that hydrolyzes ATP and a membrane integral complex (V0) that translocates protons. V-ATPase is responsible for acidifying and maintaining the pH of intracellular compartments. The protein is V-type proton ATPase subunit e (vma9) of Schizosaccharomyces pombe (strain 972 / ATCC 24843) (Fission yeast).